A 511-amino-acid chain; its full sequence is Cytochrome P450 76C4 (511 aa).

The chain crosses the membrane as a helical span at residues 3-23 (IISGQALFLLFCFISSCFLIS). C450 contributes to the heme binding site.

The protein belongs to the cytochrome P450 family. Heme serves as cofactor.

The protein resides in the membrane. In Arabidopsis thaliana (Mouse-ear cress), this protein is Cytochrome P450 76C4 (CYP76C4).